The chain runs to 443 residues: SURP and G-patch domain-containing protein 1-like protein (443 aa).

Disordered stretches follow at residues 45–71 and 83–141; these read IISNPKPAANKISIGLKPNDAQKKGGK and LAPP…TVKK. One copy of the SURP motif repeat lies at 142 to 185; sequence VADKLASFVAKHGRPFEHITRQKNPGDTPFKFLFDENCADYKYY. Disordered regions lie at residues 198–221, 241–272, and 285–325; these read QTKDSGVLHSGDAGSRTSTAAIPL, TPVEPGASSRSAQASITRPSDSDSFSGPRGAD, and AQEE…HHMG. Over residues 248 to 265 the composition is skewed to polar residues; it reads SSRSAQASITRPSDSDSF. Positions 285-300 are enriched in basic and acidic residues; that stretch reads AQEEKMRRPRQSKDEM. Residues 307–316 show a composition bias toward polar residues; it reads QGPSETSSTD. The G-patch domain maps to 360-407; it reads ADNVGHKLLSKMGWKEGEGIGSSRKGMADPIMAGDVKTNNLGVGASAP.

It localises to the nucleus. This chain is SURP and G-patch domain-containing protein 1-like protein, found in Arabidopsis thaliana (Mouse-ear cress).